A 287-amino-acid polypeptide reads, in one-letter code: MSAQVINGKVVAKTVIDRVKQRVQLRKSQGLRAPGLAVILIGDDPASSVYVNNKKKACEEAGLVSKSWNWPSKATQYELLELIKQLNEDTSIDGILVQLPLPDHIDAETIIEAIHPDKDVDGFHPYNIGRLTVRMPTLRPCTPYGCMNLLNHYDLSVKGKHAVIVGASNIVGRPMSLELLLAGATTTVCHRFTADLQTHVSMADILVTAVGKPNFIPADWIKPGAIVVDVGINRLPDGSLTGDVDPRAREVAAYVTPVPGGVGPMTIATLLENTLKACEIHQLGAVS.

NADP(+) contacts are provided by residues Gly-166–Ser-168 and Ile-232.

The protein belongs to the tetrahydrofolate dehydrogenase/cyclohydrolase family. Homodimer.

The catalysed reaction is (6R)-5,10-methylene-5,6,7,8-tetrahydrofolate + NADP(+) = (6R)-5,10-methenyltetrahydrofolate + NADPH. It catalyses the reaction (6R)-5,10-methenyltetrahydrofolate + H2O = (6R)-10-formyltetrahydrofolate + H(+). Its pathway is one-carbon metabolism; tetrahydrofolate interconversion. Catalyzes the oxidation of 5,10-methylenetetrahydrofolate to 5,10-methenyltetrahydrofolate and then the hydrolysis of 5,10-methenyltetrahydrofolate to 10-formyltetrahydrofolate. This Hydrogenovibrio crunogenus (strain DSM 25203 / XCL-2) (Thiomicrospira crunogena) protein is Bifunctional protein FolD 2.